Reading from the N-terminus, the 572-residue chain is Protein IQ-DOMAIN 30 (572 aa).

The interval 75–96 (SDDEIQVSEVQPTDSQDVASVP) is disordered. Positions 82-92 (SEVQPTDSQDV) are enriched in polar residues. 2 consecutive IQ domains span residues 108 to 136 (QEIA…GIIR) and 137 to 154 (LQAL…VSTL). The calmodulin-binding stretch occupies residues 159-178 (GIVRLQALARGREIRHSDIG). 2 disordered regions span residues 282 to 332 (RPKK…MDNP) and 399 to 572 (IQTH…EWKR). 2 stretches are compositionally biased toward polar residues: residues 291-305 (PSSN…QTSS) and 400-419 (QTHT…VNQI). Basic and acidic residues predominate over residues 428-455 (AEEKEDVKEERTPKQNHKENSAGKENQK). 3 stretches are compositionally biased toward polar residues: residues 459 to 493 (KASS…QATK), 502 to 514 (QGSS…GTTE), and 522 to 560 (LPSS…SSRE).

It belongs to the IQD family. As to quaternary structure, binds to multiple calmodulin (CaM) in the presence of Ca(2+) and CaM-like proteins.

Its subcellular location is the nucleus envelope. It localises to the cytoplasm. The protein localises to the cytoskeleton. Its function is as follows. May be involved in cooperative interactions with calmodulins or calmodulin-like proteins. Recruits calmodulin proteins to microtubules, thus being a potential scaffold in cellular signaling and trafficking. May associate with nucleic acids and regulate gene expression at the transcriptional or post-transcriptional level. The sequence is that of Protein IQ-DOMAIN 30 from Arabidopsis thaliana (Mouse-ear cress).